The sequence spans 202 residues: Tetranectin (202 aa).

An N-terminal signal peptide occupies residues 1–21 (MGFWGTYLLFCLFSFLSQLTA). 3 disulfide bridges follow: Cys-71-Cys-81, Cys-98-Cys-197, and Cys-173-Cys-189. The C-type lectin domain maps to 77–198 (VNLKCLLAFT…CRDQLPYICQ (122 aa)).

In terms of assembly, homotrimer. In terms of tissue distribution, highest expression in lung, skeletal muscle and heart. Expressed in retina.

Its subcellular location is the secreted. Tetranectin binds to plasminogen and to isolated kringle 4. May be involved in the packaging of molecules destined for exocytosis. Plays a role in retinal function. The chain is Tetranectin (Clec3b) from Mus musculus (Mouse).